The chain runs to 199 residues: Phosphatidylethanolamine N-methyltransferase (199 aa).

Over 1-12 (MTRLLGYVDPLD) the chain is Lumenal. Residues 13–33 (PSFVAAVITITFNPLYWNVVA) constitute an intramembrane region (helical). Topologically, residues 34 to 45 (RWEHKTRKLSRA) are lumenal. A helical transmembrane segment spans residues 46–66 (FGSPYLACYSLSVTILLLNFL). The Cytoplasmic portion of the chain corresponds to 67–93 (RSHCFTQAMLSQPRMESLDTPAAYSLG). The helical transmembrane segment at 94–114 (LALLGLGVVLVLSSFFALGFA) threads the bilayer. 98-100 (GLG) contributes to the S-adenosyl-L-methionine binding site. At 115 to 157 (GTFLGDYFGILKEARVTVFPFNILDNPMYWGSTANYLGWAIMH) the chain is on the lumenal side. Residues 158-178 (ASPTGLLLTVLVALTYIVALL) traverse the membrane as a helical segment. Topologically, residues 179 to 199 (YEEPFTAEIYRQKASGSHKRS) are cytoplasmic. 180–181 (EE) is a binding site for S-adenosyl-L-methionine.

The protein belongs to the class VI-like SAM-binding methyltransferase superfamily. PEMT/PEM2 methyltransferase family. Post-translationally, isoform 2 is N-glycosylated with high-mannose oligosaccharides. In terms of tissue distribution, primarily expressed in liver (at protein level).

Its subcellular location is the endoplasmic reticulum. The protein localises to the endoplasmic reticulum membrane. It is found in the mitochondrion membrane. The catalysed reaction is a 1,2-diacyl-sn-glycero-3-phospho-N-methylethanolamine + S-adenosyl-L-methionine = a 1,2-diacyl-sn-glycero-3-phospho-N,N-dimethylethanolamine + S-adenosyl-L-homocysteine + H(+). It catalyses the reaction a 1,2-diacyl-sn-glycero-3-phospho-N,N-dimethylethanolamine + S-adenosyl-L-methionine = a 1,2-diacyl-sn-glycero-3-phosphocholine + S-adenosyl-L-homocysteine + H(+). The enzyme catalyses a 1,2-diacyl-sn-glycero-3-phosphoethanolamine + S-adenosyl-L-methionine = a 1,2-diacyl-sn-glycero-3-phospho-N-methylethanolamine + S-adenosyl-L-homocysteine + H(+). It carries out the reaction 1,2-di-(9Z-octadecenoyl)-sn-glycero-3-phosphoethanolamine + S-adenosyl-L-methionine = 1,2-di-(9Z-octadecenoyl)-sn-glycero-3-phospho-N-methylethanolamine + S-adenosyl-L-homocysteine + H(+). The catalysed reaction is 1,2-di-(9Z-octadecenoyl)-sn-glycero-3-phospho-N-methylethanolamine + S-adenosyl-L-methionine = 1,2-di-(9Z-octadecenoyl)-sn-glycero-3-phospho-N,N-dimethylethanolamine + S-adenosyl-L-homocysteine + H(+). It catalyses the reaction 1,2-di-(9Z-octadecenoyl)-sn-glycero-3-phospho-N,N-dimethylethanolamine + S-adenosyl-L-methionine = 1,2-di-(9Z-octadecenoyl)-sn-glycero-3-phosphocholine + S-adenosyl-L-homocysteine + H(+). The enzyme catalyses 1,2-di-(9Z,12Z-octadecadienoyl)-sn-glycero-3-phosphoethanolamine + S-adenosyl-L-methionine = 1,2-di-(9Z,12Z-octadecadienoyl)-sn-glycero-3-phospho-N-methylethanolamine + S-adenosyl-L-homocysteine + H(+). It carries out the reaction 1,2-di-(9Z,12Z-octadecadienoyl)-sn-glycero-3-phospho-N-methylethanolamine + S-adenosyl-L-methionine = 1,2-di-(9Z,12Z-octadecadienoyl)-sn-glycero-3-phospho-N,N-dimethylethanolamine + S-adenosyl-L-homocysteine + H(+). The catalysed reaction is 1,2-di-(9Z,12Z-octadecadienoyl)-sn-glycero-3-phospho-N,N-dimethylethanolamine + S-adenosyl-L-methionine = 1,2-di-(9Z,12Z-octadecadienoyl)-sn-glycero-3-phosphocholine + S-adenosyl-L-homocysteine + H(+). It catalyses the reaction 1,2-di-(9Z,12Z,15Z-octadecatrienoyl)-sn-glycero-3-phosphoethanolamine + S-adenosyl-L-methionine = 1,2-di-(9Z,12Z,15Z-octadecatrienoyl)-sn-glycero-3-phospho-N-methylethanolamine + S-adenosyl-L-homocysteine + H(+). The enzyme catalyses 1,2-di-(9Z,12Z,15Z-octadecatrienoyl)-sn-glycero-3-phospho-N-methylethanolamine + S-adenosyl-L-methionine = 1,2-di-(9Z,12Z,15Z-octadecatrienoyl)-sn-glycero-3-phospho-N,N-dimethylethanolamine + S-adenosyl-L-homocysteine + H(+). It carries out the reaction 1,2-di-(9Z,12Z,15Z-octadecatrienoyl)-sn-glycero-3-phospho-N,N-dimethylethanolamine + S-adenosyl-L-methionine = 1,2-di-(9Z,12Z,15Z-octadecatrienoyl)-sn-glycero-3-phosphocholine + S-adenosyl-L-homocysteine + H(+). The catalysed reaction is 1-hexadecanoyl-2-(4Z,7Z,10Z,13Z,16Z,19Z-docosahexaenoyl)-sn-glycero-3-phosphoethanolamine + S-adenosyl-L-methionine = 1-hexadecanoyl-2-(4Z,7Z,10Z,13Z,16Z,19Z-docosahexaenoyl)-sn-glycero-3-phospho-N-methylethanolamine + S-adenosyl-L-homocysteine + H(+). It catalyses the reaction 1-hexadecanoyl-2-(4Z,7Z,10Z,13Z,16Z,19Z-docosahexaenoyl)-sn-glycero-3-phospho-N-methylethanolamine + S-adenosyl-L-methionine = 1-hexadecanoyl-2-(4Z,7Z,10Z,13Z,16Z,19Z-docosahexaenoyl)-sn-glycero-3-phospho-N,N-dimethylethanolamine + S-adenosyl-L-homocysteine + H(+). The enzyme catalyses 1-hexadecanoyl-2-(4Z,7Z,10Z,13Z,16Z,19Z-docosahexaenoyl)-sn-glycero-3-phospho-N,N-dimethylethanolamine + S-adenosyl-L-methionine = 1-hexadecanoyl-2-(4Z,7Z,10Z,13Z,16Z,19Z-docosahexaenoyl)-sn-glycero-3-phosphocholine + S-adenosyl-L-homocysteine + H(+). It participates in phospholipid metabolism; phosphatidylcholine biosynthesis. The first methylation is rate-limiting. Functionally, catalyzes the three sequential steps of the methylation pathway for the biosynthesis of phosphatidylcholine, a critical and essential component for membrane structure. Uses S-adenosylmethionine (S-adenosyl-L-methionine, SAM or AdoMet) as the methyl group donor for the methylation of phosphatidylethanolamine (1,2-diacyl-sn-glycero-3-phosphoethanolamine, PE) to phosphatidylmonomethylethanolamine (1,2-diacyl-sn-glycero-3-phospho-N-methylethanolamine, PMME), PMME to phosphatidyldimethylethanolamine (1,2-diacyl-sn-glycero-3-phospho-N,N-dimethylethanolamine, PDME), and PDME to phosphatidylcholine (1,2-diacyl-sn-glycero-3-phosphocholine, PC), producing S-adenosyl-L-homocysteine in each step. Responsible for approximately 30% of hepatic PC with the CDP-choline pathway accounting for the other 70%. Its function is as follows. Catalyzes the three sequential steps of the methylation of 1,2-diacyl-sn-glycero-3-phospho-N-methylethanolamine (PMME) to 1,2-diacyl-sn-glycero-3-phospho-N,N-dimethylethanolamine (PDME) more efficiently than isoform 2. Induces increase in PC species with longer polyunsaturated chains than isoform 2. In terms of biological role, produces a higher increase in the level of PC species containing long chains with three double bonds than isoform 1. This Homo sapiens (Human) protein is Phosphatidylethanolamine N-methyltransferase.